Reading from the N-terminus, the 852-residue chain is Exported protein YdbA (852 aa).

The N-terminal stretch at 1–21 (MQRKTLLSACIALALSGQGWA) is a signal peptide. Disordered regions lie at residues 30-50 (TTGE…KLSP), 91-145 (DDDH…FNND), 307-354 (TITN…QDGD), 407-449 (TNGG…KVIQ), and 506-531 (NGGT…VDGK). Residues 307–319 (TITNGGTGTQING) show a composition bias toward low complexity. Polar residues predominate over residues 339–348 (GTEINGNNGK). The segment covering 506-516 (NGGTGTQINGN) has biased composition (low complexity). Positions 517–526 (DATANNSGKT) are enriched in polar residues.

The protein resides in the secreted. In terms of biological role, the full-length protein (which is about 2000 amino acids long) is part of the autotransporter family. The polypeptide is Exported protein YdbA (ydbA) (Escherichia coli (strain K12)).